The chain runs to 383 residues: uncharacterized protein (383 aa).

The YcaO domain occupies 58-383 (GKGATRTQAR…RVGRRIRSSI (326 aa)). Residues 80 to 100 (AERKPEDETFTAHPEDCDGLD) are disordered.

This is an uncharacterized protein from Methanothermobacter thermautotrophicus (strain ATCC 29096 / DSM 1053 / JCM 10044 / NBRC 100330 / Delta H) (Methanobacterium thermoautotrophicum).